The primary structure comprises 473 residues: Histone-lysine N-methyltransferase ATXR2 (473 aa).

An SET domain is found at 33–441 (KLITSRRCNG…KNEEVTISYI (409 aa)). An MYND-type; degenerate zinc finger spans residues 134–203 (EEQCGGSSSS…DWESSHSLLC (70 aa)). Zn(2+)-binding residues include Cys-176, Cys-180, His-199, and Cys-203. Position 440 (Tyr-440) interacts with S-adenosyl-L-methionine.

This sequence belongs to the class V-like SAM-binding methyltransferase superfamily. Histone-lysine methyltransferase family. TRX/MLL subfamily. In terms of assembly, interacts with JMJ30. Binds to ARF7 and ARF19 in the nucleus.

It is found in the nucleus. The catalysed reaction is L-lysyl-[histone] + S-adenosyl-L-methionine = N(6)-methyl-L-lysyl-[histone] + S-adenosyl-L-homocysteine + H(+). In terms of biological role, histone methyltransferase that methylates 'Lys-36' (H3K36me) of histone H3 to produce H3K36me3. Promotes early stages of cellular dedifferentiation through H3K36me3-dependent, and to a lesser degree H3K4me3-dependent, activation of Lateral organ Boundaries-Domain (LBD) (e.g. LBD16 and LBD29) genes. Positive regulator of root organogenesis including lateral root formation as well as adventitious root formation from wounded leaf tissues. Recruited by JMJ30/ARF (e.g. ARF7 and ARF19) complexes to promote the deposition of H3K36me3 and, to a lower extent, H3K4me3 at LBD genes promoters, thus ensuring their stable activation during callus formation on callus-inducing medium (CIM). The sequence is that of Histone-lysine N-methyltransferase ATXR2 from Arabidopsis thaliana (Mouse-ear cress).